We begin with the raw amino-acid sequence, 532 residues long: Spore coat protein SP85 (532 aa).

Positions 1-19 (MRLLSVLLIGFLCLAGTYA) are cleaved as a signal peptide. Asparagine 47 carries an N-linked (GlcNAc...) asparagine glycan. The disordered stretch occupies residues 197 to 265 (TQSPTQPPTQ…PTQPPTQPPV (69 aa)). Positions 201 to 263 (TQPPTQPPTY…YPPTQPPTQP (63 aa)) are enriched in pro residues. Residues 267–289 (DCSTLECPEGFHCEIVNNRRTCV) form the Follistatin-like 1 domain. Residues 297–320 (THPPTQSPTYPPTQPPTQPPTYPP) are disordered. Follistatin-like domains lie at 335-359 (SCDN…ARCV), 400-423 (TCDQ…VFCV), and 430-452 (TCKQ…LHCV).

As to quaternary structure, binds to cotE. Post-translationally, O-glycosylated.

The protein localises to the spore wall. Its function is as follows. Required for incorporation of cotE into the spore coat and for the formation of the outer layer. Has a cross-bridging function between cellulose and other coat proteins. This chain is Spore coat protein SP85 (pspB), found in Dictyostelium discoideum (Social amoeba).